A 418-amino-acid chain; its full sequence is Gamma-glutamyl phosphate reductase (418 aa).

The protein belongs to the gamma-glutamyl phosphate reductase family.

It localises to the cytoplasm. The catalysed reaction is L-glutamate 5-semialdehyde + phosphate + NADP(+) = L-glutamyl 5-phosphate + NADPH + H(+). The protein operates within amino-acid biosynthesis; L-proline biosynthesis; L-glutamate 5-semialdehyde from L-glutamate: step 2/2. Its function is as follows. Catalyzes the NADPH-dependent reduction of L-glutamate 5-phosphate into L-glutamate 5-semialdehyde and phosphate. The product spontaneously undergoes cyclization to form 1-pyrroline-5-carboxylate. This is Gamma-glutamyl phosphate reductase from Histophilus somni (strain 129Pt) (Haemophilus somnus).